Consider the following 359-residue polypeptide: Opine dehydrogenase (359 aa).

The protein belongs to the lysopine/nopaline/octopine/opine/vitopine dehydrogenases family. In terms of assembly, homodimer.

It catalyses the reaction (2S)-2-[(R)-1-carboxyethylamino]pentanoate + NAD(+) + H2O = L-2-aminopentanoate + pyruvate + NADH + H(+). Functionally, in the forward direction also acts on secondary amine dicarboxylates such as N-(1-carboxyethyl)methionine and N-(1-carboxyethyl)phenylalanine. In the reverse direction, the enzyme also acts on neutral amino acids as an amino donor. They include L-amino acids such as 2-aminopentanoic acid, 2-aminobutyric acid, 2-aminohexanoic acid, 3-chloroalanine, O-acetylserine, methionine, isoleucine, valine, phenylalanine, leucine and alanine. This chain is Opine dehydrogenase (odh), found in Arthrobacter sp. (strain 1C).